The primary structure comprises 365 residues: N5-carboxyaminoimidazole ribonucleotide synthase (365 aa).

Residues Arg102, Lys143, 148 to 154 (GYDGKGQ), 177 to 180 (EEYV), Glu185, and 256 to 257 (NE) contribute to the ATP site. The region spanning 106–286 (KLFYRQHNLP…QFEQHLRAII (181 aa)) is the ATP-grasp domain.

Belongs to the PurK/PurT family. Homodimer.

It carries out the reaction 5-amino-1-(5-phospho-beta-D-ribosyl)imidazole + hydrogencarbonate + ATP = 5-carboxyamino-1-(5-phospho-D-ribosyl)imidazole + ADP + phosphate + 2 H(+). It participates in purine metabolism; IMP biosynthesis via de novo pathway; 5-amino-1-(5-phospho-D-ribosyl)imidazole-4-carboxylate from 5-amino-1-(5-phospho-D-ribosyl)imidazole (N5-CAIR route): step 1/2. Catalyzes the ATP-dependent conversion of 5-aminoimidazole ribonucleotide (AIR) and HCO(3)(-) to N5-carboxyaminoimidazole ribonucleotide (N5-CAIR). In Saccharolobus solfataricus (strain ATCC 35092 / DSM 1617 / JCM 11322 / P2) (Sulfolobus solfataricus), this protein is N5-carboxyaminoimidazole ribonucleotide synthase.